The sequence spans 319 residues: Cytochrome f (319 aa).

An N-terminal signal peptide occupies residues 1–35 (MFQQMQKISLKLLKTTFLFLFATFILVGLPSTSQA). Positions 36, 56, 59, and 60 each coordinate heme. A helical transmembrane segment spans residues 285–305 (IQGLIAFFISVIIAQTFLVLK).

This sequence belongs to the cytochrome f family. The 4 large subunits of the cytochrome b6-f complex are cytochrome b6, subunit IV (17 kDa polypeptide, petD), cytochrome f and the Rieske protein, while the 4 small subunits are PetG, PetL, PetM and PetN. The complex functions as a dimer. Requires heme as cofactor.

It is found in the plastid. It localises to the chloroplast thylakoid membrane. Its function is as follows. Component of the cytochrome b6-f complex, which mediates electron transfer between photosystem II (PSII) and photosystem I (PSI), cyclic electron flow around PSI, and state transitions. The chain is Cytochrome f from Chlorokybus atmophyticus (Soil alga).